A 118-amino-acid chain; its full sequence is Large ribosomal subunit protein bL19 (118 aa).

This sequence belongs to the bacterial ribosomal protein bL19 family.

Its function is as follows. This protein is located at the 30S-50S ribosomal subunit interface and may play a role in the structure and function of the aminoacyl-tRNA binding site. The polypeptide is Large ribosomal subunit protein bL19 (Helicobacter pylori (strain G27)).